A 235-amino-acid polypeptide reads, in one-letter code: Futalosine hydrolase (235 aa).

It belongs to the PNP/UDP phosphorylase family. Futalosine hydrolase subfamily.

The catalysed reaction is futalosine + H2O = dehypoxanthine futalosine + hypoxanthine. It participates in quinol/quinone metabolism; menaquinone biosynthesis. Its function is as follows. Catalyzes the hydrolysis of futalosine (FL) to dehypoxanthine futalosine (DHFL) and hypoxanthine, a step in the biosynthesis of menaquinone (MK, vitamin K2). Does not accept aminodeoxyfutalosine (AFL) as a substrate. The sequence is that of Futalosine hydrolase from Streptomyces coelicolor (strain ATCC BAA-471 / A3(2) / M145).